Here is a 512-residue protein sequence, read N- to C-terminus: MRSKSSEGDLQPEDTQSREDKETTATYSEDTKPETQKERNAALDNLAKTPIQLVVQPTPLTPAITPCEAPPPPPPPKPSSDNNNSKRLKVKDQLIEVPSDEVGRVENNIDNFPFYHGFMGRNECEAMLSNHGDFLIRMTEIGKRVAYVISIKWKYQNIHVLVKRTKTKKLYWTKKYAFKSICELIAYHKRNHKPIYEGMTLICGLARHGWQLNNEQVTLNKKLGEGQFGEVHKGSLKTSVFAAPVTVAVKTLHQNHLSANEKILFLREANVMLTLSHPNVIKFYGVCTMKEPIMIVMEFCDGKSLEDALLSKEEKVSAEDKILYLFHAACGIDYLHGKQVIHRDIAARNCLLNSKKILKISDFGLSVKGVAIKERKGGCLPVKYMAPETLKKGLYSTASDIYSYGALMYEVYTDGKTPFETCGLRGNELRKAIIGKRISLAVEVELPVFIANIFEQSRQYETEDRISSKQIIQIFKEEVGFHEIETSGILHKLVNSLPRIHNKERKPAAVAV.

Residues 1-85 (MRSKSSEGDL…PKPSSDNNNS (85 aa)) are disordered. Positions 15–41 (TQSREDKETTATYSEDTKPETQKERNA) are enriched in basic and acidic residues. The span at 68-78 (EAPPPPPPPKP) shows a compositional bias: pro residues. Residues 114 to 205 (FYHGFMGRNE…YEGMTLICGL (92 aa)) form the SH2 domain. The Protein kinase domain occupies 217–485 (VTLNKKLGEG…KEEVGFHEIE (269 aa)). ATP is bound by residues 223 to 231 (LGEGQFGEV) and lysine 250. Aspartate 344 functions as the Proton acceptor in the catalytic mechanism.

This sequence belongs to the protein kinase superfamily. Tyr protein kinase family. Fes/fps subfamily. As to expression, expression is restricted to male germline.

It localises to the cell membrane. Its subcellular location is the cytoplasm. The enzyme catalyses L-tyrosyl-[protein] + ATP = O-phospho-L-tyrosyl-[protein] + ADP + H(+). Probable non-receptor tyrosine-protein kinase which plays a role in spermatid activation (spermiogenesis) in hermaphrodites. The protein is Spermatocyte protein spe-8 of Caenorhabditis elegans.